Reading from the N-terminus, the 657-residue chain is NADH-quinone oxidoreductase subunit L (657 aa).

17 helical membrane passes run 5–25 (NICIMIIMLPLASSIINGLFL), 32–52 (LAQVIATGFLSLSALFSLIIF), 89–109 (IMFIAVTWVSSIVHIYSLGYM), 114–134 (GIIRFLSFLSLFTFFMLMLVS), 138–158 (FLQLFFGWEGVGVCSYLLIGF), 172–192 (AFIINRASDFAFILGVITIIV), 214–234 (IFLHFSILDIICLLLFIGCMG), 253–273 (TPVSALIHAATMVTAGVFLVA), 285–305 (ILQFITIIGGVTCLFAASIAI), 313–333 (IIAYSTCSQLGYMFMACGVSA), 339–359 (FHLVTHAFFKALLFLSAGSVI), 381–401 (YGNFLIGSLALIGIYPLAGFY), 416–436 (FMFIFGIAAAILTAIYSMKII), 465–485 (LILLVVGSFFSGMIGYYLLAM), 511–531 (LYIKLLPMAVGIVGIVTGIYL), 580–600 (EIYNCLIVKPINCLASLFYLG), and 632–652 (VFNYALYIVSFIVVTISYFVW).

Belongs to the complex I subunit 5 family.

It localises to the cell membrane. It catalyses the reaction a quinone + NADH + 5 H(+)(in) = a quinol + NAD(+) + 4 H(+)(out). In terms of biological role, NDH-1 shuttles electrons from NADH, via FMN and iron-sulfur (Fe-S) centers, to quinones in the respiratory chain. Couples the redox reaction to proton translocation (for every two electrons transferred, four hydrogen ions are translocated across the cytoplasmic membrane), and thus conserves the redox energy in a proton gradient. This Rickettsia conorii (strain ATCC VR-613 / Malish 7) protein is NADH-quinone oxidoreductase subunit L (nuoL).